A 137-amino-acid chain; its full sequence is Nucleoside diphosphate kinase (137 aa).

ATP is bound by residues lysine 10, phenylalanine 59, arginine 87, threonine 93, arginine 104, and asparagine 114. The active-site Pros-phosphohistidine intermediate is histidine 117.

Belongs to the NDK family. Homotetramer. Requires Mg(2+) as cofactor.

It is found in the cytoplasm. It catalyses the reaction a 2'-deoxyribonucleoside 5'-diphosphate + ATP = a 2'-deoxyribonucleoside 5'-triphosphate + ADP. It carries out the reaction a ribonucleoside 5'-diphosphate + ATP = a ribonucleoside 5'-triphosphate + ADP. Functionally, major role in the synthesis of nucleoside triphosphates other than ATP. The ATP gamma phosphate is transferred to the NDP beta phosphate via a ping-pong mechanism, using a phosphorylated active-site intermediate. The polypeptide is Nucleoside diphosphate kinase (Streptomyces griseus subsp. griseus (strain JCM 4626 / CBS 651.72 / NBRC 13350 / KCC S-0626 / ISP 5235)).